The sequence spans 144 residues: Ribonuclease H (144 aa).

One can recognise an RNase H type-1 domain in the interval 1 to 136; sequence MKIVTLFSDG…CDQMARNEAL (136 aa). Mg(2+) is bound by residues aspartate 9, glutamate 47, aspartate 69, and aspartate 128.

Belongs to the RNase H family. As to quaternary structure, monomer. Mg(2+) serves as cofactor.

The protein localises to the cytoplasm. It carries out the reaction Endonucleolytic cleavage to 5'-phosphomonoester.. Endonuclease that specifically degrades the RNA of RNA-DNA hybrids. The sequence is that of Ribonuclease H from Campylobacter concisus (strain 13826).